A 152-amino-acid polypeptide reads, in one-letter code: Small ribosomal subunit protein uS15 (152 aa).

The disordered stretch occupies residues 1 to 20; the sequence is MNKRRANGSSHSTRPVRTGS.

It belongs to the universal ribosomal protein uS15 family. In terms of assembly, part of the 30S ribosomal subunit.

This is Small ribosomal subunit protein uS15 from Metallosphaera sedula (strain ATCC 51363 / DSM 5348 / JCM 9185 / NBRC 15509 / TH2).